An 85-amino-acid chain; its full sequence is UPF0291 protein SPCG_1462 (85 aa).

The interval 62-85 is disordered; that stretch reads TPEKLRQVQREKGLHGRSLDDPNS.

This sequence belongs to the UPF0291 family.

The protein resides in the cytoplasm. In Streptococcus pneumoniae (strain CGSP14), this protein is UPF0291 protein SPCG_1462.